Consider the following 319-residue polypeptide: 7,8-didemethyl-8-hydroxy-5-deazariboflavin synthase (319 aa).

A Radical SAM core domain is found at 5–236 (VTYSPAYTIV…SNITLQIPPN (232 aa)). Cys19, Cys23, and Cys26 together coordinate [4Fe-4S] cluster.

Belongs to the radical SAM superfamily. CofG family. Consists of two subunits, CofG and CofH. Requires [4Fe-4S] cluster as cofactor.

It catalyses the reaction 5-amino-5-(4-hydroxybenzyl)-6-(D-ribitylimino)-5,6-dihydrouracil + S-adenosyl-L-methionine = 7,8-didemethyl-8-hydroxy-5-deazariboflavin + 5'-deoxyadenosine + L-methionine + NH4(+) + H(+). The protein operates within cofactor biosynthesis; coenzyme F0 biosynthesis. In terms of biological role, catalyzes the radical-mediated synthesis of 7,8-didemethyl-8-hydroxy-5-deazariboflavin from 5-amino-5-(4-hydroxybenzyl)-6-(D-ribitylimino)-5,6-dihydrouracil. The chain is 7,8-didemethyl-8-hydroxy-5-deazariboflavin synthase from Trichodesmium erythraeum (strain IMS101).